Reading from the N-terminus, the 2114-residue chain is Protein CELLULOSE SYNTHASE INTERACTIVE 2 (2114 aa).

ARM repeat units follow at residues 2 to 42 (TSEM…LLGL), 46 to 87 (KKEC…VLCK), 89 to 128 (KNVRSKILIGGCIPPLLSLLKSDSVDAKRVVAEAIYEVSL), 135 to 177 (NVGT…NLCG), 180 to 219 (DGFWALTLEDGGVDIILKLLQSSNPVSQSNAASLLARLIR), 222 to 262 (TSSI…AITS), 265 to 305 (EEAI…SYGT), 354 to 394 (GDTR…SLFG), 396 to 435 (VDLSKLLNNVDAKRVLVCLTILATDGPRERMITCLSNLCK), 479 to 519 (EESR…NLCC), 522 to 561 (EEIRLCVEKAGAIPALLGLLKNGGPKSQESSANTLLKLIK), 563 to 595 (ADPSVIEQVQALFLGDAPKSKTHLIRVLGHVLA), 601 to 640 (EFVTKGSAANNGLRSLVQRLASSNEKMKENAASVLADLFS), 643 to 682 (KDLCGGLGFDEDDNPCTKLLSGNTHAVATQLAHALGSLSN), 708 to 750 (AKTN…RVLR), 774 to 816 (SDVF…LLAK), 825 to 865 (HNPF…RFCK), 870 to 910 (LLGR…CAAK), 914 to 953 (TLWAEAVEQSGYLKTLVNTLLDMSKQNSKSASYGIEIQRP), 994 to 1033 (PSNRLVVMEGNGLEIIAENLQRNKSNTQENSSDSEEKWIA), 1044 to 1083 (PKVVSSPATENILQTLAPFMQSEQMIDGYFTAQVLAALVR), 1087 to 1128 (DKTI…LVQN), 1141 to 1182 (ERVR…RIAD), 1185 to 1225 (DLSK…SLFR), 1227 to 1264 (PEITRHKTAISSMKQLIGILHLASRSTRYNAARVLCEL), 1265 to 1304 (FSSEHIRDSELAWKALSPLIEMLNTTLESERVAALTALVK), 1312 to 1353 (RPDI…FLFT), 1355 to 1394 (EGLRTSTSAACCIVSLISLIRTGKSTAIEAGMFALDRLLD), 1396 to 1435 (KRFVEVAEEHDCVNLFYGYVASENYLISEAAISCLTKMAK), 1454 to 1494 (ISQL…MVQP), 1496 to 1525 (LLILLRQDLDFQGQLGGLQAIANILEKPMV), 1526 to 1564 (LESLKIASSTIIMPLIPLLESESIAVKNATTILLTSLLE), 1566 to 1605 (QRFQEEITTKNLIAPLVKLVGIRVRNLQEIALMGLERSSV), 1606 to 1648 (TWPK…NILR), 1650 to 1689 (NPEHYYFTVTIPVLSKMLFSTAESTVILAIDALIIRENQD), 1690 to 1730 (SSSV…RNPK), 1732 to 1771 (RETKICQFVLTPLSEYILDPDTISESAKILIAMALGDISQ), 1772 to 1813 (HEGL…NFAM), 1816 to 1855 (RTSRKAMAEAGGVYWVQEMLRSSNPQVSTQAALIIKSLFS), 1857 to 1898 (HTLQ…TILT), 1901 to 1940 (PKLRSSEAATACIPHLIGALKSGEQEARDSAMDTIYTLRQ), and 1949 to 1993 (TARS…CLPG). A C2 domain is found at 1974–2087 (SPAPSSFHER…LSEGSYSGIF (114 aa)).

As to quaternary structure, associates with cellulase synthase (CESA) complexes. Binds to cortical microtubules.

The protein localises to the cell membrane. It localises to the cytoplasm. The protein resides in the cytoskeleton. Functionally, regulator of the microtubular cytoskeleton. Microtubule-associated protein involved in the association of cellulase synthase (CESA) complexes (CSCs) and cortical microtubules. Promotes dynamics of CSCs in the plasma membrane. Regulates primary cell wall biosynthesis and cellulose microfibrils organization. This is Protein CELLULOSE SYNTHASE INTERACTIVE 2 from Arabidopsis thaliana (Mouse-ear cress).